The primary structure comprises 530 residues: UDP-glucuronosyltransferase 2B15 (530 aa).

Positions 1-23 (MSLKWTSVFLLIQLSCYFSSGSC) are cleaved as a signal peptide. Asparagine 65 carries N-linked (GlcNAc...) asparagine glycosylation. Lysine 136 is subject to N6-succinyllysine. 2 N-linked (GlcNAc...) asparagine glycosylation sites follow: asparagine 316 and asparagine 483. A helical membrane pass occupies residues 495–515 (IAFLLACVATVIFIITKFCLF).

Belongs to the UDP-glycosyltransferase family. As to expression, expressed in many tissues. Present in liver, prostate and testis.

It localises to the endoplasmic reticulum membrane. The enzyme catalyses glucuronate acceptor + UDP-alpha-D-glucuronate = acceptor beta-D-glucuronoside + UDP + H(+). It carries out the reaction 17alpha-estradiol + UDP-alpha-D-glucuronate = 17alpha-estradiol 3-O-(beta-D-glucuronate) + UDP + H(+). It catalyses the reaction 16alpha,17alpha-estriol + UDP-alpha-D-glucuronate = 16alpha,17alpha-estriol 3-O-(beta-D-glucuronate) + UDP + H(+). The catalysed reaction is 17beta-hydroxy-5alpha-androstan-3-one + UDP-alpha-D-glucuronate = 5alpha-dihydrotestosterone 17-O-(beta-D-glucuronate) + UDP + H(+). In terms of biological role, UDP-glucuronosyltransferase (UGT) that catalyzes phase II biotransformation reactions in which lipophilic substrates are conjugated with glucuronic acid to increase the metabolite's water solubility, thereby facilitating excretion into either the urine or bile. Essential for the elimination and detoxification of drugs, xenobiotics and endogenous compounds. Catalyzes the glucuronidation of endogenous steroid hormones such as androgens (testosterone, androsterone) and estrogens (estradiol, epiestradiol, estriol, catechol estrogens). Displays glucuronidation activity toward several classes of xenobiotic substrates, including phenolic compounds (eugenol, 4-nitrophenol, 4-hydroxybiphenyl) and phenylpropanoids (naringenin, coumarins). Catalyzes the glucuronidation of monoterpenoid alcohols such as borneol, menthol and isomenthol, a class of natural compounds used in essential oils. The chain is UDP-glucuronosyltransferase 2B15 from Homo sapiens (Human).